Here is a 304-residue protein sequence, read N- to C-terminus: Large ribosomal subunit protein uL2 (304 aa).

Residues 246–282 (HTRGTAMNPVDHPHGGGEGRTRGKHPESPWGWKTKGY) form a disordered region. Residues 256 to 272 (DHPHGGGEGRTRGKHPE) show a composition bias toward basic and acidic residues.

This sequence belongs to the universal ribosomal protein uL2 family. As to quaternary structure, part of the 50S ribosomal subunit. Forms a bridge to the 30S subunit in the 70S ribosome.

One of the primary rRNA binding proteins. Required for association of the 30S and 50S subunits to form the 70S ribosome, for tRNA binding and peptide bond formation. It has been suggested to have peptidyltransferase activity; this is somewhat controversial. Makes several contacts with the 16S rRNA in the 70S ribosome. The sequence is that of Large ribosomal subunit protein uL2 from Aquifex aeolicus (strain VF5).